We begin with the raw amino-acid sequence, 681 residues long: Structure-specific endonuclease subunit SLX4 (681 aa).

Disordered regions lie at residues E239–L305 and E505–L528. Over residues S251 to L261 the composition is skewed to polar residues. Acidic residues predominate over residues I265–N281. Composition is skewed to polar residues over residues Q288–L305 and Q518–L528.

This sequence belongs to the SLX4 family. As to quaternary structure, forms a heterodimer with SLX1. Phosphorylated in response to DNA damage.

It localises to the nucleus. Its function is as follows. Regulatory subunit of the SLX1-SLX4 structure-specific endonuclease that resolves DNA secondary structures generated during DNA repair and recombination. Has endonuclease activity towards branched DNA substrates, introducing single-strand cuts in duplex DNA close to junctions with ss-DNA. In Meyerozyma guilliermondii (strain ATCC 6260 / CBS 566 / DSM 6381 / JCM 1539 / NBRC 10279 / NRRL Y-324) (Yeast), this protein is Structure-specific endonuclease subunit SLX4.